The chain runs to 61 residues: Probable tautomerase BA_5626/GBAA_5626/BAS5226 (61 aa).

The Proton acceptor; via imino nitrogen role is filled by Pro2.

The protein belongs to the 4-oxalocrotonate tautomerase family.

This Bacillus anthracis protein is Probable tautomerase BA_5626/GBAA_5626/BAS5226.